A 2820-amino-acid chain; its full sequence is Neurofibromin (2820 aa).

A2 carries the post-translational modification N-acetylalanine. Phosphoserine is present on residues S866 and S878. Residues 1253-1463 (HLLYQLLWNM…DLARRFFLDI (211 aa)) enclose the Ras-GAP domain. Positions 1561–1719 (EKEEFKALKT…ATLALEEDLK (159 aa)) constitute a CRAL-TRIO domain. Residues 1561-1818 (EKEEFKALKT…RTRWELSQPD (258 aa)) are lipid binding. S2169 and S2448 each carry phosphoserine. The disordered stretch occupies residues 2457–2482 (YPIHHGDPSSRTLKETQPWSSPRGSE). Residues 2458-2470 (PIHHGDPSSRTLK) show a composition bias toward basic and acidic residues. Position 2495 is a phosphothreonine (T2495). S2496, S2502, S2504, and S2524 each carry phosphoserine. The Bipartite nuclear localization signal signature appears at 2536–2552 (KRQEMESGITTPPKMRR). T2546 is subject to Phosphothreonine. S2578, S2783, and S2798 each carry phosphoserine. Residues 2768–2820 (TSQHSPGIDKENVELSPTTGHCNSGRTRHGSASQVQKQRSAGSFKRNSIKKIV) form a disordered region. The span at 2782-2808 (LSPTTGHCNSGRTRHGSASQVQKQRSA) shows a compositional bias: polar residues.

In terms of assembly, interacts with HTR6. Interacts with SPRED2. Ubiquitinated by RNF7/RBX2, leading to its degradation.

The protein localises to the nucleus. It localises to the nucleolus. The protein resides in the cell membrane. In terms of biological role, stimulates the GTPase activity of Ras. NF1 shows greater affinity for Ras GAP, but lower specific activity. May be a regulator of Ras activity. This is Neurofibromin (Nf1) from Rattus norvegicus (Rat).